We begin with the raw amino-acid sequence, 167 residues long: Translationally-controlled tumor protein homolog (167 aa).

The TCTP domain occupies 1-167; that stretch reads MIIFTDVISG…WKHGVSEDKI (167 aa).

Belongs to the TCTP family.

The protein resides in the cytoplasm. It localises to the cytoskeleton. Its function is as follows. Involved in protein synthesis. Involved in microtubule stabilization. The protein is Translationally-controlled tumor protein homolog of Debaryomyces hansenii (strain ATCC 36239 / CBS 767 / BCRC 21394 / JCM 1990 / NBRC 0083 / IGC 2968) (Yeast).